The sequence spans 139 residues: D-ribose pyranase (139 aa).

Histidine 20 functions as the Proton donor in the catalytic mechanism. Substrate contacts are provided by residues aspartate 28, histidine 106, and 128 to 130; that span reads FAN.

It belongs to the RbsD / FucU family. RbsD subfamily. As to quaternary structure, homodecamer.

The protein localises to the cytoplasm. It carries out the reaction beta-D-ribopyranose = beta-D-ribofuranose. It functions in the pathway carbohydrate metabolism; D-ribose degradation; D-ribose 5-phosphate from beta-D-ribopyranose: step 1/2. Its function is as follows. Catalyzes the interconversion of beta-pyran and beta-furan forms of D-ribose. In Yersinia pseudotuberculosis serotype O:1b (strain IP 31758), this protein is D-ribose pyranase.